The following is an 89-amino-acid chain: Small ribosomal subunit protein uS15 (89 aa).

Belongs to the universal ribosomal protein uS15 family. As to quaternary structure, part of the 30S ribosomal subunit. Forms a bridge to the 50S subunit in the 70S ribosome, contacting the 23S rRNA.

Functionally, one of the primary rRNA binding proteins, it binds directly to 16S rRNA where it helps nucleate assembly of the platform of the 30S subunit by binding and bridging several RNA helices of the 16S rRNA. Forms an intersubunit bridge (bridge B4) with the 23S rRNA of the 50S subunit in the ribosome. The polypeptide is Small ribosomal subunit protein uS15 (Anoxybacillus flavithermus (strain DSM 21510 / WK1)).